Consider the following 359-residue polypeptide: Fructose-bisphosphate aldolase (359 aa).

D-glyceraldehyde 3-phosphate is bound at residue serine 62. Aspartate 110 (proton donor) is an active-site residue. Residues histidine 111, aspartate 145, glutamate 175, and histidine 227 each coordinate Zn(2+). Glycine 228 provides a ligand contact to dihydroxyacetone phosphate. Histidine 265 contacts Zn(2+). Dihydroxyacetone phosphate contacts are provided by residues 266 to 268 (GGS) and 287 to 290 (NIDT).

The protein belongs to the class II fructose-bisphosphate aldolase family. Homodimer. It depends on Zn(2+) as a cofactor.

The enzyme catalyses beta-D-fructose 1,6-bisphosphate = D-glyceraldehyde 3-phosphate + dihydroxyacetone phosphate. Its pathway is carbohydrate degradation; glycolysis; D-glyceraldehyde 3-phosphate and glycerone phosphate from D-glucose: step 4/4. Its function is as follows. Catalyzes the aldol condensation of dihydroxyacetone phosphate (DHAP or glycerone-phosphate) with glyceraldehyde 3-phosphate (G3P) to form fructose 1,6-bisphosphate (FBP) in gluconeogenesis and the reverse reaction in glycolysis. The protein is Fructose-bisphosphate aldolase (fba) of Haemophilus influenzae (strain ATCC 51907 / DSM 11121 / KW20 / Rd).